Here is a 202-residue protein sequence, read N- to C-terminus: GTP cyclohydrolase 1 (202 aa).

Zn(2+)-binding residues include C90, H93, and C163.

The protein belongs to the GTP cyclohydrolase I family. As to quaternary structure, homomer.

The enzyme catalyses GTP + H2O = 7,8-dihydroneopterin 3'-triphosphate + formate + H(+). Its pathway is cofactor biosynthesis; 7,8-dihydroneopterin triphosphate biosynthesis; 7,8-dihydroneopterin triphosphate from GTP: step 1/1. In Mycobacterium ulcerans (strain Agy99), this protein is GTP cyclohydrolase 1.